A 191-amino-acid chain; its full sequence is Probable GTP-binding protein EngB (191 aa).

Residues 22 to 190 enclose the EngB-type G domain; sequence RLPEIAFLGR…WQAITTTLQA (169 aa). GTP-binding positions include 30–37, 57–61, 75–78, 142–145, and 169–171; these read GRSNVGKS, GRTQT, DLPG, TKTD, and FSA. Residues Ser37 and Thr59 each contribute to the Mg(2+) site.

This sequence belongs to the TRAFAC class TrmE-Era-EngA-EngB-Septin-like GTPase superfamily. EngB GTPase family. Requires Mg(2+) as cofactor.

Its function is as follows. Necessary for normal cell division and for the maintenance of normal septation. The protein is Probable GTP-binding protein EngB of Solibacter usitatus (strain Ellin6076).